We begin with the raw amino-acid sequence, 305 residues long: Acyl transferase (305 aa).

Active-site charge relay system residues include S116, D213, and H243.

This sequence belongs to the LuxD family.

The protein operates within lipid metabolism; fatty acid reduction for biolumincescence. Functionally, acyl transferase is part of the fatty acid reductase system required for aldehyde biosynthesis; it produces fatty acids for the luminescent reaction. The polypeptide is Acyl transferase (Shewanella woodyi (strain ATCC 51908 / MS32)).